A 316-amino-acid polypeptide reads, in one-letter code: Adenine deaminase (316 aa).

Histidine 14, histidine 16, and histidine 194 together coordinate Zn(2+). Glutamate 197 serves as the catalytic Proton donor. Aspartate 275 provides a ligand contact to Zn(2+). Position 276 (aspartate 276) interacts with substrate.

This sequence belongs to the metallo-dependent hydrolases superfamily. Adenosine and AMP deaminases family. Adenine deaminase type 2 subfamily. Zn(2+) is required as a cofactor.

The enzyme catalyses adenine + H2O + H(+) = hypoxanthine + NH4(+). Catalyzes the hydrolytic deamination of adenine to hypoxanthine. Plays an important role in the purine salvage pathway and in nitrogen catabolism. The sequence is that of Adenine deaminase from Bordetella avium (strain 197N).